The following is a 303-amino-acid chain: Vesicle-trafficking protein SEC22c (303 aa).

The Cytoplasmic portion of the chain corresponds to Met1 to Pro183. The 112-residue stretch at Cys8 to Ile119 folds into the Longin domain. A helical membrane pass occupies residues Val184–Ile204. The Lumenal segment spans residues Arg205–Asn223. A helical membrane pass occupies residues Ile224–Tyr244. Residues Ser245–Arg248 lie on the Cytoplasmic side of the membrane. The helical transmembrane segment at Thr249–Leu269 threads the bilayer. Residue Arg270 is a topological domain, lumenal. Residues Asn271–Thr291 traverse the membrane as a helical segment. The Cytoplasmic portion of the chain corresponds to Arg292 to Val303.

This sequence belongs to the synaptobrevin family.

It is found in the endoplasmic reticulum membrane. In terms of biological role, may be involved in vesicle transport between the ER and the Golgi complex. The polypeptide is Vesicle-trafficking protein SEC22c (SEC22C) (Bos taurus (Bovine)).